The primary structure comprises 404 residues: Cysteine desulfurase IscS (404 aa).

Pyridoxal 5'-phosphate is bound by residues 75–76 (AT), Asn155, Gln183, and 203–205 (SSH). Lys206 bears the N6-(pyridoxal phosphate)lysine mark. A pyridoxal 5'-phosphate-binding site is contributed by Thr243. Cys328 functions as the Cysteine persulfide intermediate in the catalytic mechanism. A [2Fe-2S] cluster-binding site is contributed by Cys328.

This sequence belongs to the class-V pyridoxal-phosphate-dependent aminotransferase family. NifS/IscS subfamily. In terms of assembly, homodimer. Forms a heterotetramer with IscU, interacts with other sulfur acceptors. Pyridoxal 5'-phosphate serves as cofactor.

It localises to the cytoplasm. It carries out the reaction (sulfur carrier)-H + L-cysteine = (sulfur carrier)-SH + L-alanine. Its pathway is cofactor biosynthesis; iron-sulfur cluster biosynthesis. Master enzyme that delivers sulfur to a number of partners involved in Fe-S cluster assembly, tRNA modification or cofactor biosynthesis. Catalyzes the removal of elemental sulfur atoms from cysteine to produce alanine. Functions as a sulfur delivery protein for Fe-S cluster synthesis onto IscU, an Fe-S scaffold assembly protein, as well as other S acceptor proteins. This chain is Cysteine desulfurase IscS, found in Pasteurella multocida (strain Pm70).